Here is a 644-residue protein sequence, read N- to C-terminus: Cyclin-dependent kinase C-2 C (644 aa).

Positions phenylalanine 105 to phenylalanine 389 constitute a Protein kinase domain. ATP is bound by residues isoleucine 111–valine 119 and lysine 134. Tyrosine 116 carries the post-translational modification Phosphotyrosine. The active-site Proton acceptor is the aspartate 229. Position 263 is a phosphothreonine (threonine 263). Residues arginine 420–leucine 427 carry the Nuclear localization signal motif. Residues serine 565–serine 576 show a composition bias toward basic and acidic residues. The segment at serine 565 to serine 591 is disordered.

It belongs to the protein kinase superfamily. CMGC Ser/Thr protein kinase family. CDC2/CDKX subfamily. Autophosphorylated. In terms of tissue distribution, expressed specifically in flowers and pollen.

It is found in the nucleus. This chain is Cyclin-dependent kinase C-2 C, found in Arabidopsis thaliana (Mouse-ear cress).